Here is an 889-residue protein sequence, read N- to C-terminus: Disease resistance protein UNI (889 aa).

A coiled-coil region spans residues 19–64; the sequence is NCLIGKSYIRTLEKNLRALQREMEDLRAIQHEVQNKVARDEARHQR. Residues 131 to 152 form a disordered region; that stretch reads GNFDEVSQPPPRSEVEERPTQP. The NB-ARC domain maps to 137-440; sequence SQPPPRSEVE…CEGFIGEDQV (304 aa). 179–186 serves as a coordination point for ATP; the sequence is GMGGVGKT. 9 LRR repeats span residues 510–532, 533–555, 557–580, 581–603, 604–625, 626–652, 653–676, 698–721, and 825–848; these read WGAVRKMSLMDNDIEEITCESKC, SELTTLFLQSNKLKNLPGAFIRY, QKLVVLDLSYNRDFNKLPEQISGL, VSLQFLDLSNTSIEHMPIGLKEL, KKLTFLDLTYTDRLCSISGISR, LLSLRLLRLLGSKVHGDASVLKELQQL, QNLQELAITVSAELISLDQRLAKL, MENLSSLRVENSYFSEIKCRESET, and CPKLRKLPLNATSVSKVEEFEIHM.

This sequence belongs to the disease resistance NB-LRR family. In terms of assembly, interacts with RPT2A.

Involved in disease resistance via the salicylic acid (SA) signaling pathway. Involved in shoot architecture development via the cytokinin signaling pathway. The chain is Disease resistance protein UNI from Arabidopsis thaliana (Mouse-ear cress).